Reading from the N-terminus, the 311-residue chain is Homeobox protein Hox-B1a (311 aa).

Positions 217 to 276 form a DNA-binding region, homeobox; that stretch reads QNTIRTNFTTKQLTELEKEFHFSKYLTRARRVEIAATLELNETQVKIWFQNRRMKQKKRE. The segment at 267–311 is disordered; sequence NRRMKQKKREKEGLAPASSTSSKDLEDQSDHSTSTSPEASPSPDS. The segment covering 298-311 has biased composition (low complexity); that stretch reads STSTSPEASPSPDS.

The protein belongs to the Antp homeobox family. Labial subfamily.

It localises to the nucleus. Functionally, sequence-specific transcription factor which is part of a developmental regulatory system that provides cells with specific positional identities on the anterior-posterior axis. This is Homeobox protein Hox-B1a (hoxb1a) from Danio rerio (Zebrafish).